The chain runs to 512 residues: GMP synthase [glutamine-hydrolyzing] (512 aa).

The Glutamine amidotransferase type-1 domain maps to 5–195 (GIVILDFGSQ…IFGIAKAEKN (191 aa)). The Nucleophile role is filled by cysteine 82. Residues histidine 169 and glutamate 171 contribute to the active site. In terms of domain architecture, GMPS ATP-PPase spans 196-387 (WSMENYIEST…LGIPDYMVDR (192 aa)). 223-229 (SGGVDSS) is a binding site for ATP.

In terms of assembly, homodimer.

It catalyses the reaction XMP + L-glutamine + ATP + H2O = GMP + L-glutamate + AMP + diphosphate + 2 H(+). It participates in purine metabolism; GMP biosynthesis; GMP from XMP (L-Gln route): step 1/1. In terms of biological role, catalyzes the synthesis of GMP from XMP. This is GMP synthase [glutamine-hydrolyzing] from Fusobacterium nucleatum subsp. nucleatum (strain ATCC 25586 / DSM 15643 / BCRC 10681 / CIP 101130 / JCM 8532 / KCTC 2640 / LMG 13131 / VPI 4355).